Consider the following 562-residue polypeptide: Formate--tetrahydrofolate ligase (562 aa).

Residue 71–78 (TPAGEGKS) coordinates ATP.

Belongs to the formate--tetrahydrofolate ligase family.

It carries out the reaction (6S)-5,6,7,8-tetrahydrofolate + formate + ATP = (6R)-10-formyltetrahydrofolate + ADP + phosphate. The protein operates within one-carbon metabolism; tetrahydrofolate interconversion. In Bacillus anthracis (strain A0248), this protein is Formate--tetrahydrofolate ligase.